We begin with the raw amino-acid sequence, 50 residues long: Tubulin alpha chain (50 aa).

Asn28 contributes to the GTP binding site. Glu40 is an active-site residue.

Belongs to the tubulin family. As to quaternary structure, dimer of alpha and beta chains. A typical microtubule is a hollow water-filled tube with an outer diameter of 25 nm and an inner diameter of 15 nM. Alpha-beta heterodimers associate head-to-tail to form protofilaments running lengthwise along the microtubule wall with the beta-tubulin subunit facing the microtubule plus end conferring a structural polarity. Microtubules usually have 13 protofilaments but different protofilament numbers can be found in some organisms and specialized cells. It depends on Mg(2+) as a cofactor.

It is found in the cytoplasm. The protein resides in the cytoskeleton. The enzyme catalyses GTP + H2O = GDP + phosphate + H(+). Functionally, tubulin is the major constituent of microtubules, a cylinder consisting of laterally associated linear protofilaments composed of alpha- and beta-tubulin heterodimers. Microtubules grow by the addition of GTP-tubulin dimers to the microtubule end, where a stabilizing cap forms. Below the cap, tubulin dimers are in GDP-bound state, owing to GTPase activity of alpha-tubulin. The sequence is that of Tubulin alpha chain from Populus euphratica (Euphrates poplar).